Here is a 63-residue protein sequence, read N- to C-terminus: Cecropin-A2 (63 aa).

A signal peptide spans 1 to 23 (MNFYNIFVFVALILAITIGQSEA). R62 is subject to Arginine amide.

Belongs to the cecropin family. Strongly expressed in larval, pupal and adult fat body and hemocytes after injection of bacteria. Maximal expression in the adult involves fat body cells of the head, thorax and abdomen.

It is found in the secreted. Its function is as follows. Cecropins have lytic and antibacterial activity against several Gram-positive and Gram-negative bacteria. The protein is Cecropin-A2 of Drosophila melanogaster (Fruit fly).